Reading from the N-terminus, the 250-residue chain is 4-hydroxy-tetrahydrodipicolinate reductase (250 aa).

NAD(+) is bound by residues 10–15 (GVKGRI), 78–80 (GTT), and 105–108 (APNF). H135 (proton donor/acceptor) is an active-site residue. H136 is a (S)-2,3,4,5-tetrahydrodipicolinate binding site. The active-site Proton donor is the K139. A (S)-2,3,4,5-tetrahydrodipicolinate-binding site is contributed by 145–146 (GT).

Belongs to the DapB family.

It is found in the cytoplasm. The enzyme catalyses (S)-2,3,4,5-tetrahydrodipicolinate + NAD(+) + H2O = (2S,4S)-4-hydroxy-2,3,4,5-tetrahydrodipicolinate + NADH + H(+). It catalyses the reaction (S)-2,3,4,5-tetrahydrodipicolinate + NADP(+) + H2O = (2S,4S)-4-hydroxy-2,3,4,5-tetrahydrodipicolinate + NADPH + H(+). Its pathway is amino-acid biosynthesis; L-lysine biosynthesis via DAP pathway; (S)-tetrahydrodipicolinate from L-aspartate: step 4/4. Catalyzes the conversion of 4-hydroxy-tetrahydrodipicolinate (HTPA) to tetrahydrodipicolinate. This chain is 4-hydroxy-tetrahydrodipicolinate reductase, found in Streptomyces avermitilis (strain ATCC 31267 / DSM 46492 / JCM 5070 / NBRC 14893 / NCIMB 12804 / NRRL 8165 / MA-4680).